Consider the following 309-residue polypeptide: MSALSSENVNGVYIPSALLVFGTFLVKKEFVPYAVALTAVLAGFKLFTGDSKARKVLNPTEFQEFVLKEKTDISHNVSIYRFALPRPTDILGLPIGQHISLAATIEGQPKEVVRSYTPISSDNEAGYFDLLVKAYPQGNISKHLTTLKVGDVMKVRGPKGAMVYTPNMCRHIGMIAGGTGITPMLQVIKAIIRNRPRNGGTDITKVDLIFANVNPEDILLKEELDKLAAEDEDFNIYYVLNNPPQGWTGGVGFVTPEMIKERLPAPASDVKVLLCGPPPMISAMKKATESLGFTKARPVSKLEDQVFCF.

Residues 29 to 49 (EFVPYAVALTAVLAGFKLFTG) form a helical membrane-spanning segment. An FAD-binding FR-type domain is found at 60-165 (TEFQEFVLKE…RGPKGAMVYT (106 aa)). Residues 145–160 (TTLK…GPKG) and 171–208 (HIGM…KVDL) each bind FAD.

Belongs to the flavoprotein pyridine nucleotide cytochrome reductase family. As to quaternary structure, monomer. Component of the 2-(3-amino-3-carboxypropyl)histidine synthase complex composed of dph1, dph2, dph3 and a NADH-dependent reductase, predominantly cbr1. It depends on FAD as a cofactor.

The protein localises to the mitochondrion outer membrane. The enzyme catalyses 2 Fe(III)-[cytochrome b5] + NADH = 2 Fe(II)-[cytochrome b5] + NAD(+) + H(+). It catalyses the reaction 2 Fe(3+)-[Dph3] + NADH = 2 Fe(2+)-[Dph3] + NAD(+) + H(+). The protein operates within protein modification; peptidyl-diphthamide biosynthesis. Functionally, NADH-dependent reductase for dph3 and cytochrome b5. Required for the first step of diphthamide biosynthesis, a post-translational modification of histidine which occurs in elongation factor 2. Dph1 and dph2 transfer a 3-amino-3-carboxypropyl (ACP) group from S-adenosyl-L-methionine (SAM) to a histidine residue, the reaction is assisted by a reduction system comprising dph3 and a NADH-dependent reductase, predominantly cbr1. By reducing dph3, also involved in the formation of the tRNA wobble base modification mcm5s 2U (5-methoxycarbonylmethyl-2-thiouridine), mediated by the elongator complex. The cytochrome b5/NADH cytochrome b5 reductase electron transfer system supports the catalytic activity of several sterol biosynthetic enzymes. In Aspergillus clavatus (strain ATCC 1007 / CBS 513.65 / DSM 816 / NCTC 3887 / NRRL 1 / QM 1276 / 107), this protein is NADH-cytochrome b5 reductase 1 (cbr1).